The sequence spans 260 residues: Large ribosomal subunit protein uL2y (260 aa).

The tract at residues 227–248 (RRDKSAGAKVGQIAARRTGRRR) is disordered.

It belongs to the universal ribosomal protein uL2 family.

The chain is Large ribosomal subunit protein uL2y (RPL8B) from Arabidopsis thaliana (Mouse-ear cress).